The chain runs to 416 residues: MNKQSWLLNLSLLKTHPAFRAVFLARFISIVSLGLLGVAVPVQIQMMTHSTWQVGLSVTLTGGAMFVGLMVGGVLADRYERKKVILLARGTCGIGFIGLCLNALLPEPSLLAIYLLGLWDGFFASLGVTALLAATPALVGRENLMQAGAITMLTVRLGSVISPMIGGLLLATGGVAWNYGLAAAGTFITLLPLLSLPALPPPPQPREHPLKSLLAGFRFLLASPLVGGIALLGGLLTMASAVRVLYPALADNWQMSAAQIGFLYAAIPLGAAIGALTSGKLAHSARPGLLMLLSTLGSFLAIGLFGLMPMWILGVVCLALFGWLSAVSSLLQYTMLQTQTPEAMLGRINGLWTAQNVTGDAIGAALLGGLGAMMTPVASASASGFGLLIIGVLLLLVLVELRRFRQTPPQVTASDS.

At 1-21 (MNKQSWLLNLSLLKTHPAFRA) the chain is on the cytoplasmic side. A helical transmembrane segment spans residues 22–42 (VFLARFISIVSLGLLGVAVPV). The Periplasmic portion of the chain corresponds to 43-55 (QIQMMTHSTWQVG). The helical transmembrane segment at 56–76 (LSVTLTGGAMFVGLMVGGVLA) threads the bilayer. The Cytoplasmic portion of the chain corresponds to 77-83 (DRYERKK). Residues 84 to 104 (VILLARGTCGIGFIGLCLNAL) traverse the membrane as a helical segment. Residues 105–109 (LPEPS) are Periplasmic-facing. The helical transmembrane segment at 110 to 130 (LLAIYLLGLWDGFFASLGVTA) threads the bilayer. Residues 131–156 (LLAATPALVGRENLMQAGAITMLTVR) lie on the Cytoplasmic side of the membrane. Residues 157–177 (LGSVISPMIGGLLLATGGVAW) form a helical membrane-spanning segment. Position 178 (asparagine 178) is a topological domain, periplasmic. A helical transmembrane segment spans residues 179–199 (YGLAAAGTFITLLPLLSLPAL). Residues 200–218 (PPPPQPREHPLKSLLAGFR) are Cytoplasmic-facing. A helical transmembrane segment spans residues 219-239 (FLLASPLVGGIALLGGLLTMA). Residues 240–256 (SAVRVLYPALADNWQMS) lie on the Periplasmic side of the membrane. Residues 257–277 (AAQIGFLYAAIPLGAAIGALT) traverse the membrane as a helical segment. The Cytoplasmic segment spans residues 278–287 (SGKLAHSARP). The chain crosses the membrane as a helical span at residues 288–307 (GLLMLLSTLGSFLAIGLFGL). Topologically, residues 308–313 (MPMWIL) are periplasmic. Residues 314 to 336 (GVVCLALFGWLSAVSSLLQYTML) form a helical membrane-spanning segment. At 337–356 (QTQTPEAMLGRINGLWTAQN) the chain is on the cytoplasmic side. A helical membrane pass occupies residues 357–377 (VTGDAIGAALLGGLGAMMTPV). Alanine 378 is a topological domain (periplasmic). The helical transmembrane segment at 379–399 (SASASGFGLLIIGVLLLLVLV) threads the bilayer. The Cytoplasmic segment spans residues 400-416 (ELRRFRQTPPQVTASDS).

It belongs to the major facilitator superfamily. EntS (TC 2.A.1.38) family.

The protein localises to the cell inner membrane. Component of an export pathway for enterobactin. The chain is Enterobactin exporter EntS from Escherichia coli (strain 55989 / EAEC).